The chain runs to 214 residues: Octanoyltransferase (214 aa).

Residues serine 29–serine 214 form the BPL/LPL catalytic domain. Residues arginine 69–histidine 76, alanine 146–glycine 148, and glycine 159–alanine 161 contribute to the substrate site. Catalysis depends on cysteine 177, which acts as the Acyl-thioester intermediate.

It belongs to the LipB family.

Its subcellular location is the cytoplasm. It carries out the reaction octanoyl-[ACP] + L-lysyl-[protein] = N(6)-octanoyl-L-lysyl-[protein] + holo-[ACP] + H(+). It functions in the pathway protein modification; protein lipoylation via endogenous pathway; protein N(6)-(lipoyl)lysine from octanoyl-[acyl-carrier-protein]: step 1/2. In terms of biological role, catalyzes the transfer of endogenously produced octanoic acid from octanoyl-acyl-carrier-protein onto the lipoyl domains of lipoate-dependent enzymes. Lipoyl-ACP can also act as a substrate although octanoyl-ACP is likely to be the physiological substrate. The polypeptide is Octanoyltransferase (Polynucleobacter necessarius subsp. necessarius (strain STIR1)).